The primary structure comprises 765 residues: Protein transport protein Sec23A (765 aa).

Residue Thr2 is modified to N-acetylthreonine. The Zn(2+) site is built by Cys61, Cys66, Cys85, and Cys88. Residue Thr308 is modified to Phosphothreonine. A Gelsolin-like repeat occupies 632-718 (PEPVLLDSSS…EHGGSQARFL (87 aa)).

This sequence belongs to the SEC23/SEC24 family. SEC23 subfamily. As to quaternary structure, COPII is composed of at least five proteins: the Sec23/24 complex, the Sec13/31 complex and Sar1. Interacts with SEC23IP. Interacts with HTR4. Interacts with SEC16A. Interacts with SLC6A4. Interacts (as part of the Sec23/24 complex) with SEC22B; recruits SEC22B into COPII-coated vesicles and allows the transport of this cargo from the endoplasmic reticulum to the Golgi. Interacts (via Gelsolin-like repeat) with MIA2 and MIA3; specifically involved in the transport of large cargos like the collagen COL7A1. Interacts with DDHD1. Interacts with TMEM39A. Interacts with SACM1L; this interaction is reduced in the absence of TMEM39A. Interacts with kinase FAM20C; transport of FAM20C from the endoplasmic reticulum to the Golgi is likely to be mediated by COPII vesicles.

The protein resides in the cytoplasmic vesicle. Its subcellular location is the COPII-coated vesicle membrane. The protein localises to the endoplasmic reticulum membrane. It is found in the cytoplasm. It localises to the cytosol. In terms of biological role, component of the coat protein complex II (COPII) which promotes the formation of transport vesicles from the endoplasmic reticulum (ER). The coat has two main functions, the physical deformation of the endoplasmic reticulum membrane into vesicles and the selection of cargo molecules for their transport to the Golgi complex. Required for the translocation of insulin-induced glucose transporter SLC2A4/GLUT4 to the cell membrane. This is Protein transport protein Sec23A from Pongo abelii (Sumatran orangutan).